The following is a 2136-amino-acid chain: Methylcytosine dioxygenase TET1 (2136 aa).

2 stretches are compositionally biased toward basic residues: residues methionine 1–leucine 12 and lysine 20–threonine 31. The interval methionine 1 to glycine 47 is disordered. The segment covering lysine 32–threonine 43 has biased composition (polar residues). The tract at residues leucine 528 to tyrosine 674 is sufficient for binding to genomic CpG islands. The CXXC-type zinc-finger motif lies at glutamate 584–glutamate 625. Residues cysteine 591, cysteine 594, cysteine 597, cysteine 603, cysteine 606, cysteine 609, cysteine 619, and cysteine 624 each coordinate Zn(2+). Composition is skewed to basic and acidic residues over residues glutamine 712–glycine 724, glutamate 732–lysine 743, and isoleucine 849–aspartate 869. Disordered stretches follow at residues glutamine 712–threonine 746, isoleucine 849–serine 876, glutamine 899–threonine 923, and glutamate 1119–glutamine 1169. Phosphoserine is present on serine 871. Low complexity predominate over residues serine 901–serine 911. Residues glutamate 1119 to leucine 1139 show a composition bias toward polar residues. Over residues threonine 1146 to proline 1163 the composition is skewed to basic residues. Residues cysteine 1422, cysteine 1424, cysteine 1482, histidine 1508, and cysteine 1510 each contribute to the Zn(2+) site. Arginine 1551 contributes to the 2-oxoglutarate binding site. The Zn(2+) site is built by cysteine 1561, cysteine 1563, cysteine 1579, and cysteine 1588. The segment at serine 1580–serine 1593 is interaction with DNA. Residue lysine 1589 forms a Glycyl lysine isopeptide (Lys-Gly) (interchain with G-Cter in ubiquitin) linkage. Cysteine 1648 is a binding site for Zn(2+). 2-oxoglutarate is bound at residue cysteine 1664. A Zn(2+)-binding site is contributed by histidine 1670. 2 residues coordinate Fe cation: histidine 1672 and aspartate 1674. A substrate-binding site is contributed by asparagine 1677. Residue histidine 1706 coordinates 2-oxoglutarate. Disordered regions lie at residues glutamate 1774–aspartate 1897 and glutamate 1919–glutamate 1984. The segment covering asparagine 1786 to threonine 1800 has biased composition (low complexity). 2 stretches are compositionally biased toward polar residues: residues serine 1824 to leucine 1833 and histidine 1937 to alanine 1953. A compositionally biased stretch (acidic residues) spans methionine 1957–serine 1976. Histidine 2028 serves as a coordination point for Fe cation. Arginine 2043–serine 2045 is a binding site for 2-oxoglutarate. Tyrosine 2049 to histidine 2051 is a substrate binding site. Histidine 2059 lines the Zn(2+) pocket. The segment covering lysine 2074–alanine 2087 has biased composition (basic and acidic residues). The tract at residues lysine 2074–glutamate 2100 is disordered.

Belongs to the TET family. Interacts with SIN3A; recruits the transcriptional corepressor SIN3A to gene promoters. Interacts with HCFC1. Interacts (via C-terminus) with OGT. Found in a complex composed of at least SINHCAF, SIN3A, HDAC1, SAP30, RBBP4, OGT and TET1. Interacts with QSER1. Interacts with NONO (via DNA-binding domain); this interaction recruits TET1 to genomic loci. Interacts with FOXA2; this interaction may recruit TET1 to specific enhancers to preserve their unmethylated status and hence allowing gene expression. Interacts with RNF2. Directly interacts (via C-terminus) with the DCAF1 component of the CRL4(VprBP) E3 ubiquitin-protein ligase complex. As to quaternary structure, interacts with UHRF1; this interaction induces the recruitment of TET1 to replicating heterochromatin. Interacts with DCAF1. The cofactor is Fe(2+). Zn(2+) is required as a cofactor. In terms of processing, glycosylated. Interaction with OGT leads to GlcNAcylation. Monoubiquitinated at Lys-1589 by the DCX (DDB1-CUL4-X-box) E3 ubiquitin-protein ligase complex called CRL4(VprBP) or CUL4A-RBX1-DDB1-DCAF1/VPRBP complex; this modification promotes binding to DNA. As to expression, expressed in fetal heart, lung and brain, and in adult skeletal muscle, thymus and ovary. Not detected in adult heart, lung or brain. Up-regulated in glioblastoma cells (at protein level). Expressed in embryonic stem cells (at protein level).

It is found in the nucleus. The protein localises to the chromosome. The enzyme catalyses a 5-methyl-2'-deoxycytidine in DNA + 2-oxoglutarate + O2 = a 5-hydroxymethyl-2'-deoxycytidine in DNA + succinate + CO2. It catalyses the reaction a 5-hydroxymethyl-2'-deoxycytidine in DNA + 2-oxoglutarate + O2 = a 5-formyl-2'-deoxycytidine in DNA + succinate + CO2 + H2O. The catalysed reaction is a 5-formyl-2'-deoxycytidine in DNA + 2-oxoglutarate + O2 = a 5-carboxyl-2'-deoxycytidine in DNA + succinate + CO2 + H(+). In terms of biological role, dioxygenase that plays a key role in active DNA demethylation, by catalyzing the sequential oxidation of the modified genomic base 5-methylcytosine (5mC) into 5-hydroxymethylcytosine (5hmC), 5-formylcytosine (5fC), and 5-carboxylcytosine (5caC). In addition to its role in DNA demethylation, plays a more general role in chromatin regulation by recruiting histone modifying protein complexes to alter histone marks and chromatin accessibility, leading to both activation and repression of gene expression. Plays therefore a role in many biological processes, including stem cell maintenance, T- and B-cell development, inflammation regulation, genomic imprinting, neural activity or DNA repair. Involved in the balance between pluripotency and lineage commitment of cells and plays a role in embryonic stem cells maintenance and inner cell mass cell specification. Together with QSER1, plays an essential role in the protection and maintenance of transcriptional and developmental programs to inhibit the binding of DNMT3A/3B and therefore de novo methylation. May play a role in pancreatic beta-cell specification during development. In this context, may function as an upstream epigenetic regulator of PAX4 presumably through direct recruitment by FOXA2 to a PAX4 enhancer to preserve its unmethylated status, thereby potentiating PAX4 expression to adopt beta-cell fate during endocrine lineage commitment. Under DNA hypomethylation conditions, such as in female meiotic germ cells, may induce epigenetic reprogramming of pericentromeric heterochromatin (PCH), the constitutive heterochromatin of pericentromeric regions. PCH forms chromocenters in the interphase nucleus and chromocenters cluster at the prophase of meiosis. In this context, may also be essential for chromocenter clustering in a catalytic activity-independent manner, possibly through the recruitment polycomb repressive complex 1 (PRC1) to the chromocenters. During embryonic development, may be required for normal meiotic progression in oocytes and meiotic gene activation. Binds preferentially to DNA containing cytidine-phosphate-guanosine (CpG) dinucleotides over CpH (H=A, T, and C), hemimethylated-CpG and hemimethylated-hydroxymethyl-CpG. Dioxygenase that plays a key role in active DNA demethylation. Binds to promoters, particularly to those with high CG content. In hippocampal neurons, isoform 1 regulates the expression of a unique subset of genes compared to isoform 2, although some overlap exists between both isoforms, hence differentially regulates excitatory synaptic transmission. In hippocampal neuron cell cultures, isoform 1 controls both miniature excitatory postsynaptic current amplitude and frequency. Isoform 1 may regulate genes involved in hippocampal-dependent memory, leading to positive regulation of memory, contrary to isoform 2 that may decrease memory. Functionally, dioxygenase that plays a key role in active DNA demethylation. As isoform 1, binds to promoters, particularly to those with high CG content, however displays reduced global chromatin affinity compared with isoform 1, leading to decreased global DNA demethylation compared with isoform 1. Contrary to isoform 1, isoform 2 localizes during S phase to sites of ongoing DNA replication in heterochromatin, causing a significant de novo 5hmC formation, globally, and more so in heterochromatin, including LINE 1 interspersed DNA repeats leading to their activation. In hippocampal neurons, isoform 2 regulates the expression of a unique subset of genes compared to isoform 1, although some overlap between both isoforms, hence differentially regulates excitatory synaptic transmission. In hippocampal neuron cell cultures, isoform 2 controls miniature excitatory postsynaptic current frequency, but not amplitude. Isoform 2 may regulate genes involved in hippocampal-dependent memory, leading to negative regulation of memory, contrary to isoform 1 that may improve memory. In immature and partially differentiated gonadotrope cells, directly represses luteinizing hormone gene LHB expression and does not catalyze 5hmC at the gene promoter. This Homo sapiens (Human) protein is Methylcytosine dioxygenase TET1.